Reading from the N-terminus, the 101-residue chain is Small ribosomal subunit protein uS14 (101 aa).

This sequence belongs to the universal ribosomal protein uS14 family. As to quaternary structure, part of the 30S ribosomal subunit. Contacts proteins S3 and S10.

In terms of biological role, binds 16S rRNA, required for the assembly of 30S particles and may also be responsible for determining the conformation of the 16S rRNA at the A site. The sequence is that of Small ribosomal subunit protein uS14 from Histophilus somni (strain 2336) (Haemophilus somnus).